A 574-amino-acid chain; its full sequence is Phosphatidylinositol 4-kinase gamma 3 (574 aa).

Ubiquitin-like domains lie at 32 to 109 (PILV…SDLQ) and 110 to 188 (AISV…AKVR). A PI3K/PI4K catalytic domain is found at 257–555 (GNGPIRSSDG…IVPTETTEDE (299 aa)). Residues 263-269 (SSDGSGG) are G-loop. Residues 264–270 (SDGSGGA), Lys286, and 381–384 (QMFV) each bind ATP. A catalytic loop region spans residues 414–422 (ANADRHAGN). Residues 438–464 (PIDHGYCFPNKFEDCTFEWLYWPQAKE) are activation loop. Residue Asp440 participates in ATP binding.

It belongs to the PI3/PI4-kinase family. Type II PI4K subfamily.

It carries out the reaction a 1,2-diacyl-sn-glycero-3-phospho-(1D-myo-inositol) + ATP = a 1,2-diacyl-sn-glycero-3-phospho-(1D-myo-inositol 4-phosphate) + ADP + H(+). Functionally, the phosphorylation of phosphatidylinositol (PI) to PI4P is the first committed step in the generation of phosphatidylinositol 4,5-bisphosphate (PIP2), a precursor of the second messenger inositol 1,4,5-trisphosphate (InsP3). The polypeptide is Phosphatidylinositol 4-kinase gamma 3 (PI4KG3) (Arabidopsis thaliana (Mouse-ear cress)).